The chain runs to 338 residues: Eukaryotic translation initiation factor 3 subunit H (338 aa).

Residues 22 to 154 (VQCDGLAVMK…LKAYRLTPQA (133 aa)) enclose the MPN domain.

This sequence belongs to the eIF-3 subunit H family. As to quaternary structure, component of the eukaryotic translation initiation factor 3 (eIF-3) complex. The eIF-3 complex interacts with pix. Interacts with mxt.

It localises to the cytoplasm. Its function is as follows. Component of the eukaryotic translation initiation factor 3 (eIF-3) complex, which is involved in protein synthesis of a specialized repertoire of mRNAs and, together with other initiation factors, stimulates binding of mRNA and methionyl-tRNAi to the 40S ribosome. The eIF-3 complex specifically targets and initiates translation of a subset of mRNAs involved in cell proliferation. The polypeptide is Eukaryotic translation initiation factor 3 subunit H (Drosophila erecta (Fruit fly)).